Consider the following 340-residue polypeptide: Alpha-1,4-N-acetylglucosaminyltransferase (340 aa).

The Cytoplasmic segment spans residues Met1–Glu4. A helical; Signal-anchor for type II membrane protein membrane pass occupies residues Leu5 to Leu25. Residues Lys26–Lys340 are Lumenal-facing. Asn99 and Asn138 each carry an N-linked (GlcNAc...) asparagine glycan. A DXD motif motif is present at residues Asp167–Asp169. Asn251 and Asn282 each carry an N-linked (GlcNAc...) asparagine glycan.

It belongs to the glycosyltransferase 32 family. In terms of tissue distribution, detected in stomach and pancreas.

It is found in the golgi apparatus membrane. Its pathway is protein modification; protein glycosylation. Its function is as follows. Catalyzes the transfer of N-acetylglucosamine (GlcNAc) to core 2 branched O-glycans. Necessary for the synthesis of type III mucin which is specifically produced in the stomach, duodenum, and pancreatic duct. May protect against inflammation-associated gastric adenocarcinomas. The sequence is that of Alpha-1,4-N-acetylglucosaminyltransferase (A4GNT) from Homo sapiens (Human).